The primary structure comprises 187 residues: GTP cyclohydrolase 1 (187 aa).

3 residues coordinate Zn(2+): Cys-76, His-79, and Cys-148.

Belongs to the GTP cyclohydrolase I family. Toroid-shaped homodecamer, composed of two pentamers of five dimers.

The catalysed reaction is GTP + H2O = 7,8-dihydroneopterin 3'-triphosphate + formate + H(+). It participates in cofactor biosynthesis; 7,8-dihydroneopterin triphosphate biosynthesis; 7,8-dihydroneopterin triphosphate from GTP: step 1/1. The protein is GTP cyclohydrolase 1 of Streptococcus agalactiae serotype Ia (strain ATCC 27591 / A909 / CDC SS700).